Consider the following 24-residue polypeptide: Unknown protein NF004 from 2D-PAGE (24 aa).

This chain is Unknown protein NF004 from 2D-PAGE, found in Naegleria fowleri (Brain eating amoeba).